The following is a 659-amino-acid chain: Cytochrome bo(3) ubiquinol oxidase subunit 1 (659 aa).

Residues 1–14 (MFGKLSLNSIPYHD) are Extracellular-facing. Residues 15–35 (PIIMITCCVVILVFLVISIII) traverse the membrane as a helical segment. Over 36–56 (TIAQKWQYLWNEWCCTVDHKK) the chain is Cytoplasmic. Residues 57 to 77 (IAKMYIFLAFIMLFRGFADAI) traverse the membrane as a helical segment. A ubiquinone-binding residues include Arg-71, Asp-75, and His-101. Residues 78 to 109 (MMRMQQFLVSSYHGNGTGFLPPHHYDQIFTAH) lie on the Extracellular side of the membrane. A heme b-binding site is contributed by His-109. Residues 110–130 (GVIMIFFVAMPLVIGLMNFVV) form a helical membrane-spanning segment. Residues 131–148 (PLQIGSRDVAFPFLNNLS) are Cytoplasmic-facing. The helical transmembrane segment at 149-169 (LWLTIFSALLMNVSLGIGEFA) threads the bilayer. At 170–192 (QTGWLAYPPLSELQYSPGVGVDY) the chain is on the extracellular side. Heme b is bound at residue Trp-173. A helical transmembrane segment spans residues 193–213 (WIWSLQISGIGTTLTAINFLV). The Cytoplasmic portion of the chain corresponds to 214–235 (TIIKMRSSGMNWFKIPVFTWTS). A helical membrane pass occupies residues 236 to 256 (FCTNILIIASFPVLTVSLLLL). Residues 257–280 (TLDRYLGFHFFTNDFGGNMMMYVN) are Extracellular-facing. Residues 281–301 (LIWIWGHPEVYILILPVFGIF) form a helical membrane-spanning segment. Cu(2+) is bound at residue His-287. The 1'-histidyl-3'-tyrosine (His-Tyr) cross-link spans 287-291 (HPEVY). Tyr-291 is a binding site for Fe(II)-heme o. Topologically, residues 302-318 (SEVVATFSSKELFGYTS) are cytoplasmic. A helical membrane pass occupies residues 319-339 (LIWATIVITILSFIVWLHHFF). Cu(2+)-binding residues include His-336 and His-337. The Extracellular segment spans residues 340 to 350 (TMGASANVNAF). Residues 351-371 (FGITTMIISIPTGVKIFNWLF) form a helical membrane-spanning segment. The Cytoplasmic portion of the chain corresponds to 372–382 (TMYRGNVRINS). A helical membrane pass occupies residues 383–403 (IMLWTIGFLITFSIGGMAGVL). The Extracellular segment spans residues 404–416 (LSLPVIDFSLHNS). Positions 414 and 422 each coordinate Fe(II)-heme o. Residues 417–437 (LFLVAHFHNVIIGGVVFGCFA) traverse the membrane as a helical segment. Heme b is bound at residue His-424. The Cytoplasmic portion of the chain corresponds to 438 to 459 (GITYWFPKLFGFMLSEKWGKRA). The chain crosses the membrane as a helical span at residues 460 to 480 (FWCWFFGFFCAFMPLYALGLM). The Extracellular portion of the chain corresponds to 481–499 (GMTRRLSQNINPQFHSMLT). Heme b-binding residues include Arg-484 and Arg-485. Residues 500–520 (IAALGTILIFIGIVFQIIQIF) form a helical membrane-spanning segment. Residues 521–587 (VSIRDRNLNR…KLPILYTSFH (67 aa)) are Cytoplasmic-facing. Residues 588-608 (MPKNTKFGFLIGFFAFLLGFS) form a helical membrane-spanning segment. Residue Ala-609 is a topological domain, extracellular. Residues 610–630 (VWYIFWLFFISFFVIIYLLVI) traverse the membrane as a helical segment. Over 631 to 659 (KSLDTNCDYIISIEEIKEIEKCINIKKMD) the chain is Cytoplasmic.

The protein belongs to the heme-copper respiratory oxidase family. In terms of assembly, the cytochrome bo(3) ubiquinol oxidase complex is a heterooctamer of two A chains, two B chains, two C chains and two D chains. Cu(2+) serves as cofactor. Heme b is required as a cofactor. The cofactor is Fe(II)-heme o.

The protein localises to the cell membrane. It carries out the reaction 2 a ubiquinol + O2 + n H(+)(in) = 2 a ubiquinone + 2 H2O + n H(+)(out). Its function is as follows. Cytochrome bo(3) ubiquinol oxidase is the terminal enzyme in the aerobic respiratory chain. Catalyzes the four-electron reduction of O2 to water, using a ubiquinol as a membrane soluble electron donor for molecular oxygen reduction. Has proton pump activity across the membrane in addition to electron transfer, pumping 2 protons/electron and generating a proton motive force. All the redox centers of this enzyme complex are located within the largest subunit, subunit I. Protons are probably pumped via D- and K- channels found in this subunit. This Buchnera aphidicola subsp. Baizongia pistaciae (strain Bp) protein is Cytochrome bo(3) ubiquinol oxidase subunit 1 (cyoB).